Consider the following 657-residue polypeptide: Protein mono-ADP-ribosyltransferase TIPARP (657 aa).

A compositionally biased stretch (acidic residues) spans 1 to 10 (MEMETTEPEP). The tract at residues 1 to 21 (MEMETTEPEPDCVVQPPSPPD) is disordered. The residue at position 39 (Cys39) is an ADP-ribosylcysteine. The Nuclear localization signal signature appears at 41–47 (KKKDQKR). A C3H1-type zinc finger spans residues 237–264 (ENGIEICMDFLQGTCIYGRDCLKHHTVL). The 79-residue stretch at 332 to 410 (STPPSSNVNS…RRPLFRSCFI (79 aa)) folds into the WWE domain. The PARP catalytic domain occupies 449 to 657 (YPETWVYMHP…YEEVSNTVSI (209 aa)).

This sequence belongs to the ARTD/PARP family. As to quaternary structure, interacts with AHR. In terms of processing, auto-mono-ADP-ribosylated.

It is found in the nucleus. The enzyme catalyses L-aspartyl-[protein] + NAD(+) = 4-O-(ADP-D-ribosyl)-L-aspartyl-[protein] + nicotinamide. It carries out the reaction L-glutamyl-[protein] + NAD(+) = 5-O-(ADP-D-ribosyl)-L-glutamyl-[protein] + nicotinamide. The catalysed reaction is L-cysteinyl-[protein] + NAD(+) = S-(ADP-D-ribosyl)-L-cysteinyl-[protein] + nicotinamide + H(+). With respect to regulation, ADP-ribosyltransferase activity is inhibited by PJ34; inhibition is however not specific to TIPARP and other PARP-domain containing proteins are also inhibited by PJ34. Partially inhibited by KU0058948. In terms of biological role, ADP-ribosyltransferase that mediates mono-ADP-ribosylation of glutamate, aspartate and cysteine residues on target proteins. Acts as a negative regulator of AHR by mediating mono-ADP-ribosylation of AHR, leading to inhibit transcription activator activity of AHR. This is Protein mono-ADP-ribosyltransferase TIPARP from Homo sapiens (Human).